A 165-amino-acid polypeptide reads, in one-letter code: Methyl-coenzyme M reductase II operon protein D (165 aa).

In terms of assembly, MCR is composed of three subunits: alpha, beta, and gamma. The function of protein D is not known.

In Methanothermus fervidus (strain ATCC 43054 / DSM 2088 / JCM 10308 / V24 S), this protein is Methyl-coenzyme M reductase II operon protein D (mrtD).